A 79-amino-acid chain; its full sequence is D-alanyl carrier protein (79 aa).

The 78-residue stretch at 2 to 79 (AEFKEQVLDI…MVIKKLEEIR (78 aa)) folds into the Carrier domain. S37 bears the O-(pantetheine 4'-phosphoryl)serine mark.

The protein belongs to the DltC family. 4'-phosphopantetheine is transferred from CoA to a specific serine of apo-DCP.

Its subcellular location is the cytoplasm. It functions in the pathway cell wall biogenesis; lipoteichoic acid biosynthesis. Its function is as follows. Carrier protein involved in the D-alanylation of lipoteichoic acid (LTA). The loading of thioester-linked D-alanine onto DltC is catalyzed by D-alanine--D-alanyl carrier protein ligase DltA. The DltC-carried D-alanyl group is further transferred to cell membrane phosphatidylglycerol (PG) by forming an ester bond, probably catalyzed by DltD. D-alanylation of LTA plays an important role in modulating the properties of the cell wall in Gram-positive bacteria, influencing the net charge of the cell wall. This chain is D-alanyl carrier protein, found in Bacillus mycoides (strain KBAB4) (Bacillus weihenstephanensis).